Here is a 322-residue protein sequence, read N- to C-terminus: Thymidylate synthase (322 aa).

Residues Arg-25 and 184-185 contribute to the dUMP site; that span reads RR. The active-site Nucleophile is Cys-204. DUMP is bound by residues 224 to 227, Asn-235, and 265 to 267; these read RSGD and HIY. Asp-227 contacts (6R)-5,10-methylene-5,6,7,8-tetrahydrofolate. Position 321 (Ala-321) interacts with (6R)-5,10-methylene-5,6,7,8-tetrahydrofolate.

Belongs to the thymidylate synthase family. Bacterial-type ThyA subfamily. As to quaternary structure, homodimer.

It is found in the cytoplasm. It catalyses the reaction dUMP + (6R)-5,10-methylene-5,6,7,8-tetrahydrofolate = 7,8-dihydrofolate + dTMP. It functions in the pathway pyrimidine metabolism; dTTP biosynthesis. Its function is as follows. Catalyzes the reductive methylation of 2'-deoxyuridine-5'-monophosphate (dUMP) to 2'-deoxythymidine-5'-monophosphate (dTMP) while utilizing 5,10-methylenetetrahydrofolate (mTHF) as the methyl donor and reductant in the reaction, yielding dihydrofolate (DHF) as a by-product. This enzymatic reaction provides an intracellular de novo source of dTMP, an essential precursor for DNA biosynthesis. This is Thymidylate synthase from Leuconostoc mesenteroides subsp. mesenteroides (strain ATCC 8293 / DSM 20343 / BCRC 11652 / CCM 1803 / JCM 6124 / NCDO 523 / NBRC 100496 / NCIMB 8023 / NCTC 12954 / NRRL B-1118 / 37Y).